A 233-amino-acid chain; its full sequence is 5'-methylthioadenosine/S-adenosylhomocysteine nucleosidase (233 aa).

Glutamate 12 acts as the Proton acceptor in catalysis. Substrate is bound by residues glycine 78, isoleucine 152, and 173–174 (ME). Aspartate 197 (proton donor) is an active-site residue.

The protein belongs to the PNP/UDP phosphorylase family. MtnN subfamily. As to quaternary structure, homodimer.

It carries out the reaction S-adenosyl-L-homocysteine + H2O = S-(5-deoxy-D-ribos-5-yl)-L-homocysteine + adenine. The enzyme catalyses S-methyl-5'-thioadenosine + H2O = 5-(methylsulfanyl)-D-ribose + adenine. It catalyses the reaction 5'-deoxyadenosine + H2O = 5-deoxy-D-ribose + adenine. Its pathway is amino-acid biosynthesis; L-methionine biosynthesis via salvage pathway; S-methyl-5-thio-alpha-D-ribose 1-phosphate from S-methyl-5'-thioadenosine (hydrolase route): step 1/2. Its function is as follows. Catalyzes the irreversible cleavage of the glycosidic bond in both 5'-methylthioadenosine (MTA) and S-adenosylhomocysteine (SAH/AdoHcy) to adenine and the corresponding thioribose, 5'-methylthioribose and S-ribosylhomocysteine, respectively. Also cleaves 5'-deoxyadenosine, a toxic by-product of radical S-adenosylmethionine (SAM) enzymes, into 5-deoxyribose and adenine. Thus, is required for in vivo function of the radical SAM enzymes biotin synthase and lipoic acid synthase, that are inhibited by 5'-deoxyadenosine accumulation. This Sodalis glossinidius (strain morsitans) protein is 5'-methylthioadenosine/S-adenosylhomocysteine nucleosidase.